The following is a 300-amino-acid chain: MTSIDWRSALTDDEQGSIRDIVAAATRHDGVAPVGDQVLRELPADRTRHLVAVDPDAGAVVGYLNLAPASDTAPPMAELVVHPDFRRRGTGAAMARAGLAEGGTHARIWAHGNLEAARATARTLGLQVVRELLQMRRPLTDLPPVTVADGVRLATYSGPGDDPELLRINNSAFAWHPEQGGWTDADIAERRAEAWFDPAGLFMAFDDASGKLLGFHWTKVHGPDLGEVYVVGVDPAAQGRGLGATLTLTGLHHLAERLSNSPQPTVMLYVEADNGAAVKTYRRLGFDVSSVDAAYAAVAD.

2 N-acetyltransferase domains span residues 4 to 140 (IDWR…RPLT) and 151 to 300 (VRLA…AVAD). A 1D-myo-inositol 2-(L-cysteinylamino)-2-deoxy-alpha-D-glucopyranoside-binding site is contributed by aspartate 36. 79-81 (LVV) is a binding site for acetyl-CoA. The 1D-myo-inositol 2-(L-cysteinylamino)-2-deoxy-alpha-D-glucopyranoside site is built by glutamate 178, lysine 219, and glutamate 227. 231–233 (VGV) is an acetyl-CoA binding site. Tyrosine 269 is a binding site for 1D-myo-inositol 2-(L-cysteinylamino)-2-deoxy-alpha-D-glucopyranoside. An acetyl-CoA-binding site is contributed by 274-279 (NGAAVK).

This sequence belongs to the acetyltransferase family. MshD subfamily. As to quaternary structure, monomer.

The enzyme catalyses 1D-myo-inositol 2-(L-cysteinylamino)-2-deoxy-alpha-D-glucopyranoside + acetyl-CoA = mycothiol + CoA + H(+). In terms of biological role, catalyzes the transfer of acetyl from acetyl-CoA to desacetylmycothiol (Cys-GlcN-Ins) to form mycothiol. This chain is Mycothiol acetyltransferase, found in Mycobacterium sp. (strain MCS).